The following is a 246-amino-acid chain: Ribonuclease 3 (246 aa).

Residues 18 to 147 enclose the RNase III domain; that stretch reads FQELQNKIGI…FIGALYLDQG (130 aa). Glu-60 contributes to the Mg(2+) binding site. Residue Asp-64 is part of the active site. Mg(2+) contacts are provided by Asp-133 and Glu-136. Glu-136 is a catalytic residue. One can recognise a DRBM domain in the interval 173–242; the sequence is DFKSQLQELV…AQMALETLRA (70 aa).

This sequence belongs to the ribonuclease III family. As to quaternary structure, homodimer. Mg(2+) serves as cofactor.

The protein resides in the cytoplasm. The catalysed reaction is Endonucleolytic cleavage to 5'-phosphomonoester.. Digests double-stranded RNA. Involved in the processing of primary rRNA transcript to yield the immediate precursors to the large and small rRNAs (23S and 16S). Processes some mRNAs, and tRNAs when they are encoded in the rRNA operon. Processes pre-crRNA and tracrRNA of type II CRISPR loci if present in the organism. In Geobacillus kaustophilus (strain HTA426), this protein is Ribonuclease 3.